The chain runs to 278 residues: Diaminopimelate epimerase (278 aa).

Substrate-binding residues include Asn13, Gln46, and Asn65. Catalysis depends on Cys74, which acts as the Proton donor. Substrate-binding positions include Gly75 to Asn76, Asn157, Asn190, and Glu208 to Arg209. Cys217 (proton acceptor) is an active-site residue. Gly218 to Thr219 contacts substrate.

Belongs to the diaminopimelate epimerase family. In terms of assembly, homodimer.

The protein localises to the cytoplasm. The catalysed reaction is (2S,6S)-2,6-diaminopimelate = meso-2,6-diaminopimelate. It participates in amino-acid biosynthesis; L-lysine biosynthesis via DAP pathway; DL-2,6-diaminopimelate from LL-2,6-diaminopimelate: step 1/1. Its function is as follows. Catalyzes the stereoinversion of LL-2,6-diaminopimelate (L,L-DAP) to meso-diaminopimelate (meso-DAP), a precursor of L-lysine and an essential component of the bacterial peptidoglycan. The polypeptide is Diaminopimelate epimerase (Magnetococcus marinus (strain ATCC BAA-1437 / JCM 17883 / MC-1)).